A 146-amino-acid polypeptide reads, in one-letter code: Ribonuclease P protein component (146 aa).

It belongs to the RnpA family. As to quaternary structure, consists of a catalytic RNA component (M1 or rnpB) and a protein subunit.

It catalyses the reaction Endonucleolytic cleavage of RNA, removing 5'-extranucleotides from tRNA precursor.. Its function is as follows. RNaseP catalyzes the removal of the 5'-leader sequence from pre-tRNA to produce the mature 5'-terminus. It can also cleave other RNA substrates such as 4.5S RNA. The protein component plays an auxiliary but essential role in vivo by binding to the 5'-leader sequence and broadening the substrate specificity of the ribozyme. The polypeptide is Ribonuclease P protein component (Helicobacter hepaticus (strain ATCC 51449 / 3B1)).